The chain runs to 626 residues: Colicin-Ib (626 aa).

Polar residues predominate over residues 276–286 (QQLTQQKNTPD). The tract at residues 276-308 (QQLTQQKNTPDGKTIVSPEKFPGRSSTNHSIVV) is disordered. Residues 588–612 (FSVMLGTPVGILGFAIIMAAVSALV) traverse the membrane as a helical segment.

Belongs to the channel forming colicin family.

It localises to the host membrane. In terms of biological role, this colicin is a channel-forming colicin. This class of transmembrane toxins depolarize the cytoplasmic membrane, leading to dissipation of cellular energy. Colicins are polypeptide toxins produced by and active against E.coli and closely related bacteria. The sequence is that of Colicin-Ib (cib) from Escherichia coli.